Reading from the N-terminus, the 275-residue chain is DNA polymerase II subunit B4 (275 aa).

The DNA-binding element occupies 11-17 (LPLAIVR). The segment covering 112–122 (ASYPAGGAALK) has biased composition (low complexity). Residues 112–275 (ASYPAGGAAL…EEVESDEEDE (164 aa)) form a disordered region. The short motif at 135-142 (KKRKQEEP) is the Nuclear localization signal element. Positions 151–161 (SKIDEETKRND) are enriched in basic and acidic residues. Residues 152–179 (KIDEETKRNDEETENDNTEEENGNDEED) are a coiled coil. Composition is skewed to acidic residues over residues 162 to 237 (EETE…EESG) and 266 to 275 (EEVESDEEDE).

It belongs to the NFYB/HAP3 subunit family. In terms of assembly, heterotrimeric transcription factor composed of three components, NF-YA, NF-YB and NF-YC. NF-YB and NF-YC must interact and dimerize for NF-YA association and DNA binding. Binds directly with DPB3-1.

It is found in the nucleus. In terms of biological role, component of the NF-Y/HAP transcription factor complex. The NF-Y complex stimulates the transcription of various genes by recognizing and binding to a CCAAT motif in promoters. The polypeptide is DNA polymerase II subunit B4 (Arabidopsis thaliana (Mouse-ear cress)).